The following is a 417-amino-acid chain: Squamosa promoter-binding-like protein 14 (417 aa).

2 stretches are compositionally biased toward gly residues: residues 1 to 26 and 51 to 60; these read MEMA…GGGG and AGGGGTGSGS. Disordered regions lie at residues 1–32 and 51–102; these read MEMA…EHRQ and AGGG…PPPP. Residues 61–74 are compositionally biased toward low complexity; sequence GSASAAPPSSSSKA. Residues 75–84 are compositionally biased toward gly residues; it reads AGGGRGGGGK. The SBP-type zinc finger occupies 101 to 178; it reads PPRCQVEGCG…AGHNERRRRP (78 aa). C104, C109, C126, H129, C145, C148, and H152 together coordinate Zn(2+). The Bipartite nuclear localization signal signature appears at 161–177; that stretch reads KRSCRRRLAGHNERRRR. The residue at position 163 (S163) is a Phosphoserine. Residue C164 participates in Zn(2+) binding. Residues 387 to 417 form a disordered region; it reads LQGNGPAPAPRIDPGSGSTFDQTSNTMDWSL. The span at 402–417 shows a compositional bias: polar residues; sequence SGSTFDQTSNTMDWSL.

Interacts with PCF1 and PCF2. Interacts with IPI1. Interacts with D53. Interacts with SLR1. Interacts (via C-terminus) with SHI1. Post-translationally, phosphorylated at Ser-163 in response to infection by the fungal pathogen Magnaporthe oryzae. In terms of processing, ubiquitinated by IPI1, which leads to proteasomal degradation. As to expression, expressed in young panicles. Expressed in the shoot apex at both the vegetative and reproductive stages. Highly expressed in the promordia of primary and secondary branches. Highly expressed in young panicles.

The protein localises to the nucleus. In terms of biological role, transcriptional activator that binds to the SBP-box DNA core binding motif 5'-GTAC-3'. Can target the TCP motif 5'-TGGGCC/T-3' through interaction with PCF1 and PCF2. Key regulator of the plant architecture that controls shoot branching and panicle development. Promotes panicle branching. Promotes high grain yield. Binds to the promoters of TB1 and DEP1. Suppresses rice tillering mainly through positive regulation of TB1. Regulates plant height and panicle length through positive regulation of DEP1. Repressed by D53 in strigolactone (SL) signaling. Acts with D53 to mediate the SL-regulated tiller development. Functions as a direct downstream component of D53 in regulating tiller number and SL-induced gene expression. Binds directly to the D53 promoter and plays a critical role in the negative feedback regulation of SL-induced D53 expression. Involved in defense response against pathogens. Phosphorylated at Ser-163 in response to infection by the fungal pathogen Magnaporthe oryzae. Phosphorylation reduces SPL14/IPA1 binding to the GTAC site in the DEP1 promoter and enhances binding to the TGGGCC site in the WRKY45 promoter. Binding to the promoter of the pathogen defense gene WRKY45 activates its expression, leading to enhanced disease resistance. Reduces gibberellin-mediated disease susceptibility by stabilizing SLR1. Possesses transactivation activity in yeast cells. In Oryza sativa subsp. japonica (Rice), this protein is Squamosa promoter-binding-like protein 14.